Consider the following 491-residue polypeptide: 3-octaprenyl-4-hydroxybenzoate carboxy-lyase (491 aa).

Asn-172 lines the Mn(2+) pocket. Prenylated FMN is bound by residues 175–177 (IYR), 189–191 (RWL), and 194–195 (RG). Glu-238 provides a ligand contact to Mn(2+). Asp-287 serves as the catalytic Proton donor.

This sequence belongs to the UbiD family. As to quaternary structure, homohexamer. The cofactor is prenylated FMN. Mn(2+) serves as cofactor.

It localises to the cell membrane. The enzyme catalyses a 4-hydroxy-3-(all-trans-polyprenyl)benzoate + H(+) = a 2-(all-trans-polyprenyl)phenol + CO2. Its pathway is cofactor biosynthesis; ubiquinone biosynthesis. In terms of biological role, catalyzes the decarboxylation of 3-octaprenyl-4-hydroxy benzoate to 2-octaprenylphenol, an intermediate step in ubiquinone biosynthesis. This Alcanivorax borkumensis (strain ATCC 700651 / DSM 11573 / NCIMB 13689 / SK2) protein is 3-octaprenyl-4-hydroxybenzoate carboxy-lyase.